A 433-amino-acid chain; its full sequence is Serine carboxypeptidase-like 11 (433 aa).

The first 21 residues, 1-21 (MELTLKLLVLLLFILNHHVGS), serve as a signal peptide directing secretion. 3 disulfides stabilise this stretch: cysteine 80–cysteine 322, cysteine 243–cysteine 257, and cysteine 281–cysteine 288. N-linked (GlcNAc...) asparagine glycosylation occurs at asparagine 101. Serine 176 is an active-site residue. Residue asparagine 342 is glycosylated (N-linked (GlcNAc...) asparagine). Aspartate 358 is a catalytic residue. N-linked (GlcNAc...) asparagine glycosylation is present at asparagine 374. Histidine 411 is a catalytic residue.

It belongs to the peptidase S10 family. As to expression, ubiquitous.

The protein localises to the secreted. In terms of biological role, probable carboxypeptidase. The sequence is that of Serine carboxypeptidase-like 11 (SCPL11) from Arabidopsis thaliana (Mouse-ear cress).